The chain runs to 315 residues: Ester hydrolase C11orf54 homolog (315 aa).

The Zn(2+) site is built by histidine 266, histidine 268, and histidine 278.

In terms of assembly, monomer. It depends on Zn(2+) as a cofactor.

It localises to the nucleus. It is found in the cytoplasm. Functionally, exhibits ester hydrolase activity on the substrate p-nitrophenyl acetate, in vitro. Regulates DNA damage and repair by regulating HIF1A degradation via chaperone-mediated autophagy (CMA). This chain is Ester hydrolase C11orf54 homolog, found in Mus musculus (Mouse).